A 308-amino-acid chain; its full sequence is tRNA dimethylallyltransferase (308 aa).

Position 17-24 (17-24 (GPTGSGKS)) interacts with ATP. Position 19–24 (19–24 (TGSGKS)) interacts with substrate.

It belongs to the IPP transferase family. Monomer. The cofactor is Mg(2+).

It catalyses the reaction adenosine(37) in tRNA + dimethylallyl diphosphate = N(6)-dimethylallyladenosine(37) in tRNA + diphosphate. In terms of biological role, catalyzes the transfer of a dimethylallyl group onto the adenine at position 37 in tRNAs that read codons beginning with uridine, leading to the formation of N6-(dimethylallyl)adenosine (i(6)A). The chain is tRNA dimethylallyltransferase from Paenarthrobacter aurescens (strain TC1).